Reading from the N-terminus, the 450-residue chain is Saccharopine dehydrogenase [NADP(+), L-glutamate-forming] (450 aa).

NADP(+) is bound by residues 9 to 12, 32 to 34, 54 to 55, Ile-75, 97 to 98, 124 to 126, and Ser-174; these read SGFV, CRT, DV, TS, and VDP. L-saccharopine-binding positions include 98-99 and Asp-125; that span reads SY. Residues Arg-223 and 244 to 246 contribute to the L-saccharopine site; that span reads TLR.

It belongs to the saccharopine dehydrogenase family. Homodimer.

The protein resides in the cytoplasm. It carries out the reaction L-saccharopine + NADP(+) + H2O = (S)-2-amino-6-oxohexanoate + L-glutamate + NADPH + H(+). Its pathway is amino-acid biosynthesis; L-lysine biosynthesis via AAA pathway; L-lysine from L-alpha-aminoadipate (fungal route): step 2/3. The sequence is that of Saccharopine dehydrogenase [NADP(+), L-glutamate-forming] from Schizosaccharomyces pombe (strain 972 / ATCC 24843) (Fission yeast).